Reading from the N-terminus, the 418-residue chain is Probable carboxypeptidase AO090166000075 (418 aa).

An N-terminal signal peptide occupies residues 1–18; that stretch reads MKATDLFHVTALVAGALA. Residue N74 is glycosylated (N-linked (GlcNAc...) asparagine). Residue D147 coordinates Zn(2+). A glycan (N-linked (GlcNAc...) asparagine) is linked at N168. E179 acts as the Proton acceptor in catalysis. E180 is a binding site for Zn(2+).

Belongs to the peptidase M20A family. Zn(2+) is required as a cofactor.

Its subcellular location is the secreted. The sequence is that of Probable carboxypeptidase AO090166000075 from Aspergillus oryzae (strain ATCC 42149 / RIB 40) (Yellow koji mold).